We begin with the raw amino-acid sequence, 606 residues long: UvrABC system protein C (606 aa).

One can recognise a GIY-YIG domain in the interval 18-96 (SQPGVYRMMN…IKSLNPRYNI (79 aa)). Residues 205 to 240 (TEVLKSITRKMHEAAEEQEYEQAALFRDQIQSLRKI) form the UVR domain.

This sequence belongs to the UvrC family. As to quaternary structure, interacts with UvrB in an incision complex.

The protein localises to the cytoplasm. The UvrABC repair system catalyzes the recognition and processing of DNA lesions. UvrC both incises the 5' and 3' sides of the lesion. The N-terminal half is responsible for the 3' incision and the C-terminal half is responsible for the 5' incision. The sequence is that of UvrABC system protein C from Nitrosospira multiformis (strain ATCC 25196 / NCIMB 11849 / C 71).